The primary structure comprises 185 residues: Elongation factor P (185 aa).

The protein belongs to the elongation factor P family.

The protein resides in the cytoplasm. Its pathway is protein biosynthesis; polypeptide chain elongation. Functionally, involved in peptide bond synthesis. Stimulates efficient translation and peptide-bond synthesis on native or reconstituted 70S ribosomes in vitro. Probably functions indirectly by altering the affinity of the ribosome for aminoacyl-tRNA, thus increasing their reactivity as acceptors for peptidyl transferase. The sequence is that of Elongation factor P from Dechloromonas aromatica (strain RCB).